A 944-amino-acid polypeptide reads, in one-letter code: MFAWWGRTVYRYRFIVIGVMVALCLGGGVFGLSLGKHVTQSGFYDDGSQSVQASVLGDQVYGRDRSGHIVAIFQAPAGKTVDDPAWSKKVVDELNRFQQDHPDQVLGWAGYLRASQATGMATADKKYTFVSIPLKGDDDDTILNNYKAIAPDLQRLDGGTVKLAGLQPVAEALTGTIATDQRRMEVLALPLVAVVLFFVFGGVIAAGLPVMVGGLCIAGALGIMRFLAIFGPVHYFAQPVVSLIGLGIAIDYGLFIVSRFREEIAEGYDTETAVRRTVITAGRTVTFSAVLIVASAIGLLLFPQGFLKSLTYATIASVMLSAILSITVLPACLGILGKHVDALGVRTLFRVPFLANWKISAAYLNWLADRLQRTKTREEVEAGFWGKLVNRVMKRPVLFAAPIVIIMILLIIPVGKLSLGGISEKYLPPTNSVRQAQEEFDKLFPGYRTNPLTLVIQTSNHQPVTDAQIADIRSKAMAIGGFIEPDNDPANMWQERAYAVGASKDPSVRVLQNGLINPADASKKLTELRAITPPKGITVLVGGTPALELDSIHGLFAKMPLMVVILLTTTIVLMFLAFGSVVLPIKATLMSALTLGSTMGILTWIFVDGHFSKWLNFTPTPLTAPVIGLIIALVFGLSTDYEVFLVSRMVEARERGMSTQEAIRIGTAATGRIITAAALIVAVVAGAFVFSDLVMMKYLAFGLMAALLLDATVVRMFLVPSVMKLLGDDCWWAPRWARRLQTRIGLGEIHLPDERKRPVSNGRPARPPVTAGLVAARAAGDPRPPHDPTHPLAESPRPARSSPASSPELTPALEATAAPAAPSGASTTRMQIGSSTEPPTTRLAAAGRSVQSPASTPPPTPTPPSAPSAGQTRAMPLAANRSTDAAGDPAEPTAALPIIRSDGDDSEAATEQLNARGTSDKTRQRRRGGGALSAQDLLRREGRL.

Over 1–13 (MFAWWGRTVYRYR) the chain is Cytoplasmic. A helical membrane pass occupies residues 14–34 (FIVIGVMVALCLGGGVFGLSL). The Periplasmic portion of the chain corresponds to 35 to 185 (GKHVTQSGFY…TIATDQRRME (151 aa)). An a 1,2-diacylglycero-3-phosphoethanolamine-binding site is contributed by 40–44 (QSGFY). A helical membrane pass occupies residues 186–206 (VLALPLVAVVLFFVFGGVIAA). At 207–209 (GLP) the chain is on the cytoplasmic side. Residues 210–230 (VMVGGLCIAGALGIMRFLAIF) traverse the membrane as a helical segment. Residues 231–235 (GPVHY) are Periplasmic-facing. Residues 236–256 (FAQPVVSLIGLGIAIDYGLFI) form a helical membrane-spanning segment. The Cytoplasmic segment spans residues 257–286 (VSRFREEIAEGYDTETAVRRTVITAGRTVT). Residues 287–307 (FSAVLIVASAIGLLLFPQGFL) traverse the membrane as a helical segment. The Periplasmic segment spans residues 308–314 (KSLTYAT). The helical transmembrane segment at 315-335 (IASVMLSAILSITVLPACLGI) threads the bilayer. Residues 336–396 (LGKHVDALGV…KLVNRVMKRP (61 aa)) are Cytoplasmic-facing. The chain crosses the membrane as a helical span at residues 397 to 417 (VLFAAPIVIIMILLIIPVGKL). The Periplasmic segment spans residues 418 to 562 (SLGGISEKYL…HGLFAKMPLM (145 aa)). The chain crosses the membrane as a helical span at residues 563–583 (VVILLTTTIVLMFLAFGSVVL). Residues 584 to 586 (PIK) lie on the Cytoplasmic side of the membrane. A helical membrane pass occupies residues 587 to 607 (ATLMSALTLGSTMGILTWIFV). Residues 608-616 (DGHFSKWLN) are Periplasmic-facing. A helical transmembrane segment spans residues 617-637 (FTPTPLTAPVIGLIIALVFGL). Residues 638–672 (STDYEVFLVSRMVEARERGMSTQEAIRIGTAATGR) lie on the Cytoplasmic side of the membrane. A helical membrane pass occupies residues 673–693 (IITAAALIVAVVAGAFVFSDL). The Periplasmic portion of the chain corresponds to 694 to 698 (VMMKY). Residues 699 to 719 (LAFGLMAALLLDATVVRMFLV) form a helical membrane-spanning segment. Topologically, residues 720–944 (PSVMKLLGDD…QDLLRREGRL (225 aa)) are cytoplasmic. A disordered region spans residues 778 to 944 (AAGDPRPPHD…QDLLRREGRL (167 aa)). Positions 791–828 (PLAESPRPARSSPASSPELTPALEATAAPAAPSGASTT) are enriched in low complexity. Over residues 829-839 (RMQIGSSTEPP) the composition is skewed to polar residues. Residues 855-866 (STPPPTPTPPSA) are compositionally biased toward pro residues.

It belongs to the resistance-nodulation-cell division (RND) (TC 2.A.6) family. MmpL subfamily. Monomer. Interacts with TtfA (via N-terminus); active trehalose monomycolate (TMM) biosynthesis is not required for the complex formation.

The protein resides in the cell inner membrane. It localises to the cell septum. The protein localises to the cell tip. Its activity is regulated as follows. Inhibited by the antitubercular drug SQ109. Also inhibited by several other compounds such as the pyrrole derivative BM212, the adamantyl urea derivative AU1235, the benzimidazole C215, indoleamides, tetrahydropyrazolo[1,5-a]pyrimidine-3-carboxamide (THPP) and N-benzyl-6',7'-dihydrospiro[piperidine-4,4'-thieno[3,2-c]pyran] (Spiro) analogs. Inhibitory effects of these compounds, including SQ109, are most likely due to their ability to dissipate the transmembrane electrochemical proton gradient. Functionally, transports trehalose monomycolate (TMM) to the cell wall. Flips TMM across the inner membrane. Membrane potential is not required for this function. Transports probably phosphatidylethanolamine (PE) as well. Binds specifically both TMM and PE, but not trehalose dimycolate (TDM). Also binds diacylglycerol (DAG) and other phospholipids, including phosphatidylglycerol (PG), phosphatidylinositol (PI), and cardiolipin (CDL). Contributes to membrane potential, cell wall composition, antibiotic susceptibility and fitness. Could also be part of a heme-iron acquisition system. Is the target of the antitubercular drug SQ109. The chain is Trehalose monomycolate exporter MmpL3 (mmpL3) from Mycobacterium tuberculosis (strain ATCC 25618 / H37Rv).